The following is a 226-amino-acid chain: Small ribosomal subunit protein uS3 (226 aa).

The 69-residue stretch at 39–107 (IRAYIKKNVV…EVTLNIKEVK (69 aa)) folds into the KH type-2 domain.

It belongs to the universal ribosomal protein uS3 family. Part of the 30S ribosomal subunit. Forms a tight complex with proteins S10 and S14.

Its function is as follows. Binds the lower part of the 30S subunit head. Binds mRNA in the 70S ribosome, positioning it for translation. The chain is Small ribosomal subunit protein uS3 from Pelagibacter ubique (strain HTCC1062).